The primary structure comprises 96 residues: Colicin-K immunity protein (96 aa).

A helical transmembrane segment spans residues 73-93 (ALFYLLMAIPVGLPSFIYYTL).

The protein localises to the cell membrane. Its function is as follows. This protein is able to protect a cell, which harbors the plasmid ColK encoding colicin K, against colicin K. The polypeptide is Colicin-K immunity protein (cki) (Escherichia coli).